A 436-amino-acid polypeptide reads, in one-letter code: 3-ketoacyl-CoA thiolase (436 aa).

Residue Cys-99 is the Acyl-thioester intermediate of the active site. Active-site proton acceptor residues include His-392 and Cys-422.

Belongs to the thiolase-like superfamily. Thiolase family. In terms of assembly, heterotetramer of two alpha chains (FadJ) and two beta chains (FadI).

It is found in the cytoplasm. It catalyses the reaction an acyl-CoA + acetyl-CoA = a 3-oxoacyl-CoA + CoA. The protein operates within lipid metabolism; fatty acid beta-oxidation. Catalyzes the final step of fatty acid oxidation in which acetyl-CoA is released and the CoA ester of a fatty acid two carbons shorter is formed. This Shewanella oneidensis (strain ATCC 700550 / JCM 31522 / CIP 106686 / LMG 19005 / NCIMB 14063 / MR-1) protein is 3-ketoacyl-CoA thiolase.